Reading from the N-terminus, the 957-residue chain is Glycine dehydrogenase (decarboxylating) (957 aa).

Lys708 carries the N6-(pyridoxal phosphate)lysine modification.

This sequence belongs to the GcvP family. As to quaternary structure, the glycine cleavage system is composed of four proteins: P, T, L and H. Pyridoxal 5'-phosphate is required as a cofactor.

It catalyses the reaction N(6)-[(R)-lipoyl]-L-lysyl-[glycine-cleavage complex H protein] + glycine + H(+) = N(6)-[(R)-S(8)-aminomethyldihydrolipoyl]-L-lysyl-[glycine-cleavage complex H protein] + CO2. In terms of biological role, the glycine cleavage system catalyzes the degradation of glycine. The P protein binds the alpha-amino group of glycine through its pyridoxal phosphate cofactor; CO(2) is released and the remaining methylamine moiety is then transferred to the lipoamide cofactor of the H protein. This chain is Glycine dehydrogenase (decarboxylating), found in Salmonella heidelberg (strain SL476).